The following is a 551-amino-acid chain: Nicotianamine aminotransferase B (551 aa).

Positions 24 to 127 (KSNGHGVAAA…GHAAAAAEEE (104 aa)) are disordered. The span at 86–96 (GHRESNGHAEA) shows a compositional bias: basic and acidic residues. The segment covering 111–123 (AANGESNGHAAAA) has biased composition (low complexity). Position 379 is an N6-(pyridoxal phosphate)lysine (Lys-379).

It belongs to the class-I pyridoxal-phosphate-dependent aminotransferase family. It depends on pyridoxal 5'-phosphate as a cofactor. Expressed in roots, but not in leaves.

The catalysed reaction is nicotianamine + 2-oxoglutarate = 3''-deamino-3''-oxonicotianamine + L-glutamate. Involved in biosynthesis of mugineic acid family phytosiderophores. The chain is Nicotianamine aminotransferase B from Hordeum vulgare (Barley).